Reading from the N-terminus, the 703-residue chain is DnaJ homolog subfamily C member 14 (703 aa).

Disordered regions lie at residues 1 to 150 (MAQK…DGSS) and 164 to 229 (EDEE…RKRS). A compositionally biased stretch (low complexity) spans 17 to 28 (SGGSSLITSGSS). Over residues 75–84 (HGPPRGPGPP) the composition is skewed to pro residues. Composition is skewed to acidic residues over residues 89–102 (YPDESETCSEESGV) and 164–176 (EDEELEEEYDDEE). Residues 193–202 (PPSRRQRHRF) show a composition bias toward basic residues. Residues 203-218 (LTKEDVRDSGRRDPKA) show a composition bias toward basic and acidic residues. Over residues 219-228 (PGRHRLARKR) the composition is skewed to basic residues. Transmembrane regions (helical) follow at residues 254–274 (WWLIELLVLVGEYVETCGYLI), 305–325 (VMFQFLSQSFFSVAGLFIRLL), and 327–347 (VVGAFLLLALALFLGCLQLGW). The 65-residue stretch at 444 to 508 (NPFHVLGVEA…ERRKEYEMKR (65 aa)) folds into the J domain. Disordered stretches follow at residues 622–643 (FGSRVPGTSGRQRATPESPPAD) and 659–703 (MSNG…PFQR). Over residues 673–684 (GTTSTSRPNSSV) the composition is skewed to polar residues. A compositionally biased stretch (basic residues) spans 691–703 (PKRRKKVRRPFQR).

Interacts with the FxxxFxxxF motif of DRD1 via its C-terminal domain. Detected in heart, brain, lung, liver, skeletal muscle, kidney and testis.

It is found in the endoplasmic reticulum membrane. In terms of biological role, regulates the export of target proteins, such as DRD1, from the endoplasmic reticulum to the cell surface. This is DnaJ homolog subfamily C member 14 (Dnajc14) from Rattus norvegicus (Rat).